A 362-amino-acid polypeptide reads, in one-letter code: Phospho-N-acetylmuramoyl-pentapeptide-transferase (362 aa).

10 helical membrane-spanning segments follow: residues 28-48 (IISF…VITW), 72-92 (TPTM…MVCA), 94-114 (LSNI…ILGL), 131-151 (VLHK…IIFM), 169-189 (FMPQ…VGTS), 200-220 (GLAI…AWIS), 236-256 (FSGE…GFLW), 264-284 (IFMG…IAVL), 290-310 (LLLI…LQVI), and 339-359 (IIVR…ITLK).

This sequence belongs to the glycosyltransferase 4 family. MraY subfamily. The cofactor is Mg(2+).

The protein resides in the cell inner membrane. The catalysed reaction is UDP-N-acetyl-alpha-D-muramoyl-L-alanyl-gamma-D-glutamyl-meso-2,6-diaminopimeloyl-D-alanyl-D-alanine + di-trans,octa-cis-undecaprenyl phosphate = di-trans,octa-cis-undecaprenyl diphospho-N-acetyl-alpha-D-muramoyl-L-alanyl-D-glutamyl-meso-2,6-diaminopimeloyl-D-alanyl-D-alanine + UMP. It functions in the pathway cell wall biogenesis; peptidoglycan biosynthesis. In terms of biological role, catalyzes the initial step of the lipid cycle reactions in the biosynthesis of the cell wall peptidoglycan: transfers peptidoglycan precursor phospho-MurNAc-pentapeptide from UDP-MurNAc-pentapeptide onto the lipid carrier undecaprenyl phosphate, yielding undecaprenyl-pyrophosphoryl-MurNAc-pentapeptide, known as lipid I. The protein is Phospho-N-acetylmuramoyl-pentapeptide-transferase of Blochmanniella pennsylvanica (strain BPEN).